A 178-amino-acid chain; its full sequence is MAQDQGEKENPMRELRIRKLCLNICVGESGDRLTRAAKVLEQLTGQTPVFSKARYTVRSFGIRRNEKIAVHCTVRGAKAEEILEKGLKVREYELRKNNFSDTGNFGFGIQEHIDLGIKYDPSIGIYGLDFYVVLGRPGFSIADKKRRTGCIGAKHRISKEEAMRWFQQKYDGIILPGK.

The residue at position 2 (Ala2) is an N-acetylalanine. A Glycyl lysine isopeptide (Lys-Gly) (interchain with G-Cter in SUMO2) cross-link involves residue Lys38. Thr44 and Thr47 each carry phosphothreonine. Lys52 bears the N6-acetyllysine; alternate mark. A Glycyl lysine isopeptide (Lys-Gly) (interchain with G-Cter in SUMO2); alternate cross-link involves residue Lys52. Lys85 is subject to N6-acetyllysine. A Glycyl lysine isopeptide (Lys-Gly) (interchain with G-Cter in SUMO2) cross-link involves residue Lys154.

The protein belongs to the universal ribosomal protein uL5 family. In terms of assembly, component of the large ribosomal subunit (LSU). Part of the 5S RNP complex, which is a LSU subcomplex composed of the 5S RNA, RPL5 and RPL11. Component of a hexameric 5S RNP precursor complex, composed of 5S RNA, RRS1, RPF2/BXDC1, RPL5, RPL11 and HEATR3; this complex acts as a precursor for ribosome assembly. Interacts with PML. Interacts with MDM2 (via its RanBP2-type zinc finger domain); negatively regulates MDM2-mediated TP53 ubiquitination and degradation. Interacts with NOP53; retains RPL11 into the nucleolus.

Its subcellular location is the nucleus. It localises to the nucleolus. The protein localises to the cytoplasm. Its function is as follows. Component of the ribosome, a large ribonucleoprotein complex responsible for the synthesis of proteins in the cell. The small ribosomal subunit (SSU) binds messenger RNAs (mRNAs) and translates the encoded message by selecting cognate aminoacyl-transfer RNA (tRNA) molecules. The large subunit (LSU) contains the ribosomal catalytic site termed the peptidyl transferase center (PTC), which catalyzes the formation of peptide bonds, thereby polymerizing the amino acids delivered by tRNAs into a polypeptide chain. The nascent polypeptides leave the ribosome through a tunnel in the LSU and interact with protein factors that function in enzymatic processing, targeting, and the membrane insertion of nascent chains at the exit of the ribosomal tunnel. As part of the 5S RNP/5S ribonucleoprotein particle it is an essential component of the LSU, required for its formation and the maturation of rRNAs. It also couples ribosome biogenesis to p53/TP53 activation. As part of the 5S RNP it accumulates in the nucleoplasm and inhibits MDM2, when ribosome biogenesis is perturbed, mediating the stabilization and the activation of TP53. Promotes nucleolar location of PML. In Oryctolagus cuniculus (Rabbit), this protein is Large ribosomal subunit protein uL5 (RPL11).